Here is a 75-residue protein sequence, read N- to C-terminus: Conotoxin Vn5.5 (75 aa).

An N-terminal signal peptide occupies residues 1–19 (MLCLPVFIILLLLASPAAP). Residues 20–59 (NPLEKRIQSDLIRAALEDADMKTDEREIVNIIDSISDVAK) constitute a propeptide that is removed on maturation. A Pyrrolidone carboxylic acid modification is found at Q60.

Belongs to the conotoxin T superfamily. In terms of processing, contains 2 disulfide bonds that can be either 'C1-C3, C2-C4' or 'C1-C4, C2-C3', since these disulfide connectivities have been observed for conotoxins with cysteine framework V (for examples, see AC P0DQQ7 and AC P81755). Expressed by the venom duct.

It localises to the secreted. In Conus ventricosus (Mediterranean cone), this protein is Conotoxin Vn5.5.